A 148-amino-acid polypeptide reads, in one-letter code: Small ribosomal subunit protein bS16 (148 aa).

Residues 107–148 (AAARAAAGAEDRPATTPKKAKKAASADGADAPAADAPTAAGQ) are disordered. The segment covering 129–148 (AASADGADAPAADAPTAAGQ) has biased composition (low complexity).

Belongs to the bacterial ribosomal protein bS16 family.

The sequence is that of Small ribosomal subunit protein bS16 from Frankia alni (strain DSM 45986 / CECT 9034 / ACN14a).